The primary structure comprises 116 residues: Flagellar transcriptional regulator FlhD (116 aa).

This sequence belongs to the FlhD family. In terms of assembly, homodimer; disulfide-linked. Forms a heterohexamer composed of two FlhC and four FlhD subunits. Each FlhC binds a FlhD dimer, forming a heterotrimer, and a hexamer assembles by dimerization of two heterotrimers.

The protein localises to the cytoplasm. In terms of biological role, functions in complex with FlhC as a master transcriptional regulator that regulates transcription of several flagellar and non-flagellar operons by binding to their promoter region. Activates expression of class 2 flagellar genes, including fliA, which is a flagellum-specific sigma factor that turns on the class 3 genes. Also regulates genes whose products function in a variety of physiological pathways. The polypeptide is Flagellar transcriptional regulator FlhD (Pantoea ananatis (strain LMG 20103)).